Reading from the N-terminus, the 643-residue chain is ATP-dependent RNA helicase DeaD (643 aa).

Residues 6-34 carry the Q motif motif; it reads TTFADLGLKAPILEALTDLGYEKPSPIQA. In terms of domain architecture, Helicase ATP-binding spans 37 to 208; it reads IPHLLDGRDV…RRFMKEPQEV (172 aa). ATP is bound at residue 50–57; sequence AQTGSGKT. Positions 156–159 match the DEAD box motif; that stretch reads DEAD. The region spanning 232-379 is the Helicase C-terminal domain; the sequence is KNEALVRFLE…EVELPNAELL (148 aa). Disordered stretches follow at residues 440 to 482 and 557 to 643; these read VPPV…KRER and MNMQ…GGDA. Basic and acidic residues-rich tracts occupy residues 448 to 482 and 567 to 643; these read PRREFRDRDDSFDRRGDRNDRGPRGDREDRPKRER and PRTE…GGDA.

Belongs to the DEAD box helicase family. DeaD/CsdA subfamily.

It is found in the cytoplasm. The enzyme catalyses ATP + H2O = ADP + phosphate + H(+). In terms of biological role, DEAD-box RNA helicase involved in various cellular processes at low temperature, including ribosome biogenesis, mRNA degradation and translation initiation. This is ATP-dependent RNA helicase DeaD from Klebsiella pneumoniae.